Consider the following 441-residue polypeptide: Dolichyl-diphosphooligosaccharide--protein glycosyltransferase 48 kDa subunit (441 aa).

A signal peptide spans 1–28 (MKMVPRLAVRAWPLCGLLLAALGCVCAS). The Lumenal segment spans residues 29–412 (GPRTLVLLDN…YERFIPSAYP (384 aa)). Residues 413–432 (YYASAFSMMAGLFLFSVVFL) form a helical membrane-spanning segment. Over 433-441 (HMKEKEKSD) the chain is Cytoplasmic.

It belongs to the DDOST 48 kDa subunit family. As to quaternary structure, component of the oligosaccharyltransferase (OST) complex. OST exists in two different complex forms which contain common core subunits RPN1, RPN2, OST48, OST4, DAD1 and TMEM258, either STT3A or STT3B as catalytic subunits, and form-specific accessory subunits. STT3A complex assembly occurs through the formation of 3 subcomplexes. Subcomplex 1 contains RPN1 and TMEM258, subcomplex 2 contains the STT3A-specific subunits STT3A, DC2/OSTC, and KCP2 as well as the core subunit OST4, and subcomplex 3 contains RPN2, DAD1, and OST48. The STT3A complex can form stable complexes with the Sec61 complex or with both the Sec61 and TRAP complexes. Interacts with SMIM22.

It localises to the endoplasmic reticulum membrane. It functions in the pathway protein modification; protein glycosylation. Subunit of the oligosaccharyl transferase (OST) complex that catalyzes the initial transfer of a defined glycan (Glc(3)Man(9)GlcNAc(2) in eukaryotes) from the lipid carrier dolichol-pyrophosphate to an asparagine residue within an Asn-X-Ser/Thr consensus motif in nascent polypeptide chains, the first step in protein N-glycosylation. N-glycosylation occurs cotranslationally and the complex associates with the Sec61 complex at the channel-forming translocon complex that mediates protein translocation across the endoplasmic reticulum (ER). All subunits are required for a maximal enzyme activity. Required for the assembly of both SST3A- and SS3B-containing OST complexes. This is Dolichyl-diphosphooligosaccharide--protein glycosyltransferase 48 kDa subunit from Rattus norvegicus (Rat).